We begin with the raw amino-acid sequence, 911 residues long: MGTGTLSSLLLLLLLVTIGDADMKGHFDPAKCRYALGMQDRTIPDSDISVSSSWSDSTAARHSRLESSDGDGAWCPAGPVFPKEEEYLQVDLRRLHLVALVGTQGRHAGGLGKEFSRSYRLRYSRDGRRWMDWKDRWGQEVISGNEDPGGVVLKDLGPPMVARLVRFYPRADRVMSVCLRVELYGCLWRDGLLSYTAPVGQTMQLSEVMVHLNDSTYDGYTAGGLQYGGLGQLADGVVGLDDFRQSQELRVWPGYDYVGWSNQSFPTGYVEMEFEFDRLRTFQTMQVHCNNMHTLGARLPGGVECRFKRGPAMAWEGEPVRHALGGSLGDPRARAISVPLGGHVGRFLQCRFLFAGPWLLFSEISFISDVVNDSSDTFPPAPWWPPGPPPTNFSSLELEPRGQQPVAKAEGSPTAILIGCLVAIILLLLLIIALMLWRLHWRRLLSKAERRVLEEELTVHLSVPGDTILINNRPGPREPPPYQEPRPRGTPPHSAPCVPNGSALLLSNPAYRLLLATYARPPRGPGPPTPAWAKPTNTQACSGDYMEPEKPGAPLLPPPPQNSVPHYAEADIVTLQGVTGGNTYAVPALPPGAVGDGPPRVDFPRSRLRFKEKLGEGQFGEVHLCEVEDPQDLVSSDFPISVHKGHPLLVAVKILRPDATKNARNDFLKEVKIMSRLKDPNIIRLLGVCVQDDPLCMITDYMENGDLNQFLSARQLENKATQGLSGDTESDQGPTISYPMLLHVGAQIASGMRYLATLNFVHRDLATRNCLVGENFTIKIADFGMSRNLYAGDYYRVQGRAVLPIRWMAWECILMGKFTTASDVWAFGVTLWEVLMLCRSQPFGQLTDEQVIENAGEFFRDQGRQVYLSRPPACPQTLYELMLRCWSREPEQRPPFAQLHRFLADDALNTV.

The N-terminal stretch at 1–19 (MGTGTLSSLLLLLLLVTIG) is a signal peptide. The Extracellular portion of the chain corresponds to 22–415 (DMKGHFDPAK…VAKAEGSPTA (394 aa)). One can recognise an F5/8 type C domain in the interval 32 to 186 (CRYALGMQDR…VCLRVELYGC (155 aa)). 2 disulfide bridges follow: Cys-32/Cys-186 and Cys-75/Cys-178. Positions 193–369 (LSYTAPVGQT…LFSEISFISD (177 aa)) are DS-like domain. Ca(2+) contacts are provided by Asn-213, Gln-232, Asp-235, Val-237, Tyr-255, and Tyr-257. An N-linked (GlcNAc...) asparagine glycan is attached at Asn-213. N-linked (GlcNAc...) asparagine glycosylation occurs at Asn-262. An intrachain disulfide couples Cys-305 to Cys-350. 2 residues coordinate Ca(2+): Ser-362 and Glu-363. N-linked (GlcNAc...) asparagine glycosylation is found at Asn-372 and Asn-392. The chain crosses the membrane as a helical span at residues 416–436 (ILIGCLVAIILLLLLIIALML). The Cytoplasmic segment spans residues 437–911 (WRLHWRRLLS…FLADDALNTV (475 aa)). A disordered region spans residues 468–496 (ILINNRPGPREPPPYQEPRPRGTPPHSAP). Over residues 477–494 (REPPPYQEPRPRGTPPHS) the composition is skewed to pro residues. The PPxY motif signature appears at 479-482 (PPPY). Phosphotyrosine; by autocatalysis occurs at positions 482, 511, and 518. One can recognise a Protein kinase domain in the interval 608-903 (LRFKEKLGEG…PPFAQLHRFL (296 aa)). Residues 614 to 622 (LGEGQFGEV) and Lys-653 each bind ATP. Tyr-738 carries the post-translational modification Phosphotyrosine; by autocatalysis. The active-site Proton acceptor is the Asp-764. A phosphotyrosine; by autocatalysis mark is found at Tyr-790, Tyr-794, and Tyr-795.

Belongs to the protein kinase superfamily. Tyr protein kinase family. Insulin receptor subfamily. In terms of assembly, homodimer. Interacts (via PPxY motif) with WWC1 (via WW domains) in a collagen-regulated manner. Forms a tripartite complex with WWC1 and PRKCZ, but predominantly in the absence of collagen. Interacts (tyrosine phosphorylated) with SHC1. Interacts with SRC. Interacts with MYH9. Interacts with CDH1. Interacts with PTPN11. Interacts with NCK2. Autophosphorylated in response to fibrillar collagen binding. In terms of tissue distribution, detected in the cochlea and the organ of Corti in the inner ear. Isoform 1 is predominant and is expressed in developing embryo and adult brain. Isoform 2 is expressed in various epithelial cells.

The protein resides in the cell membrane. The enzyme catalyses L-tyrosyl-[protein] + ATP = O-phospho-L-tyrosyl-[protein] + ADP + H(+). Functionally, tyrosine kinase that functions as a cell surface receptor for fibrillar collagen and regulates cell attachment to the extracellular matrix, remodeling of the extracellular matrix, cell migration, differentiation, survival and cell proliferation. Collagen binding triggers a signaling pathway that involves SRC and leads to the activation of MAP kinases. Regulates remodeling of the extracellular matrix by up-regulation of the matrix metalloproteinases MMP2, MMP7 and MMP9, and thereby facilitates cell migration and wound healing, but also tumor cell invasion. Promotes smooth muscle cell migration, and thereby contributes to arterial wound healing. Phosphorylates PTPN11. Required for normal blastocyst implantation during pregnancy, for normal mammary gland differentiation and normal lactation. Required for normal ear morphology and normal hearing. The protein is Epithelial discoidin domain-containing receptor 1 (Ddr1) of Mus musculus (Mouse).